A 682-amino-acid polypeptide reads, in one-letter code: Tail-specific protease (682 aa).

A signal peptide spans 1–22 (MNMFFRLTALAGLLAIAGQTFA). One can recognise a PDZ domain in the interval 238 to 322 (NTEMSLSLEG…SKVRLEILPA (85 aa)). Residues Ser452, Asp463, and Lys477 each act as charge relay system in the active site. Residues 635–650 (GKPELKKLDDLPKDYQ) are compositionally biased toward basic and acidic residues. The interval 635–654 (GKPELKKLDDLPKDYQEPDP) is disordered.

This sequence belongs to the peptidase S41A family.

It is found in the cell inner membrane. The enzyme catalyses The enzyme shows specific recognition of a C-terminal tripeptide, Xaa-Yaa-Zaa, in which Xaa is preferably Ala or Leu, Yaa is preferably Ala or Tyr, and Zaa is preferably Ala, but then cleaves at a variable distance from the C-terminus. A typical cleavage is -Ala-Ala-|-Arg-Ala-Ala-Lys-Glu-Asn-Tyr-Ala-Leu-Ala-Ala.. In terms of biological role, involved in the cleavage of a C-terminal peptide of 11 residues from the precursor form of penicillin-binding protein 3 (PBP3). May be involved in protection of the bacterium from thermal and osmotic stresses. This chain is Tail-specific protease (prc), found in Escherichia coli (strain K12).